The sequence spans 253 residues: Triosephosphate isomerase, cytosolic (253 aa).

Substrate-binding residues include asparagine 10 and lysine 12. The active-site Electrophile is the histidine 96. Glutamate 166 acts as the Proton acceptor in catalysis.

Belongs to the triosephosphate isomerase family. As to quaternary structure, homodimer.

Its subcellular location is the cytoplasm. The catalysed reaction is D-glyceraldehyde 3-phosphate = dihydroxyacetone phosphate. The protein operates within carbohydrate biosynthesis; gluconeogenesis. Its pathway is carbohydrate degradation; glycolysis; D-glyceraldehyde 3-phosphate from glycerone phosphate: step 1/1. The polypeptide is Triosephosphate isomerase, cytosolic (Coptis japonica (Japanese goldthread)).